The primary structure comprises 111 residues: Large ribosomal subunit protein uL22 (111 aa).

It belongs to the universal ribosomal protein uL22 family. As to quaternary structure, part of the 50S ribosomal subunit.

Functionally, this protein binds specifically to 23S rRNA; its binding is stimulated by other ribosomal proteins, e.g. L4, L17, and L20. It is important during the early stages of 50S assembly. It makes multiple contacts with different domains of the 23S rRNA in the assembled 50S subunit and ribosome. In terms of biological role, the globular domain of the protein is located near the polypeptide exit tunnel on the outside of the subunit, while an extended beta-hairpin is found that lines the wall of the exit tunnel in the center of the 70S ribosome. This is Large ribosomal subunit protein uL22 from Protochlamydia amoebophila (strain UWE25).